A 384-amino-acid polypeptide reads, in one-letter code: Omega-6 fatty acid desaturase, endoplasmic reticulum (384 aa).

A disordered region spans residues 1–23 (MGAGGRMQVSPSPKKSETDTLKR). Positions 14–23 (KKSETDTLKR) are enriched in basic and acidic residues. Transmembrane regions (helical) follow at residues 56-76 (LIWDIIVASCFYYVATTYFPL) and 84-104 (VAWPLYWACQGVVLTGVWVIA). The short motif at 105–109 (HECGH) is the Histidine box-1 element. Residues 117–137 (WLDDTVGLIFHSFLLVPYFSW) traverse the membrane as a helical segment. Residues 141 to 145 (HRRHH) carry the Histidine box-2 motif. Transmembrane regions (helical) follow at residues 180–200 (VMLTVQFTLGWPLYWAFNVSG), 226–246 (IYVSDAGILAVCYGLYRYAAA), and 253–273 (VCLYGVPLLIVNAFLVLITYL). The short motif at 316–320 (HVAHH) is the Histidine box-3 element.

It belongs to the fatty acid desaturase type 1 family.

The protein resides in the endoplasmic reticulum membrane. It functions in the pathway lipid metabolism; polyunsaturated fatty acid biosynthesis. ER (microsomal) omega-6 fatty acid desaturase introduces the second double bond in the biosynthesis of 18:3 fatty acids, important constituents of plant membranes. It is thought to use cytochrome b5 as an electron donor and to act on fatty acids esterified to phosphatidylcholine and, possibly, other phospholipids. The protein is Omega-6 fatty acid desaturase, endoplasmic reticulum of Brassica juncea (Indian mustard).